The primary structure comprises 1400 residues: DNA-directed RNA polymerase subunit beta' (1400 aa).

Positions 71, 73, 86, and 89 each coordinate Zn(2+). Mg(2+) is bound by residues aspartate 462, aspartate 464, and aspartate 466. 4 residues coordinate Zn(2+): cysteine 810, cysteine 884, cysteine 891, and cysteine 894.

This sequence belongs to the RNA polymerase beta' chain family. The RNAP catalytic core consists of 2 alpha, 1 beta, 1 beta' and 1 omega subunit. When a sigma factor is associated with the core the holoenzyme is formed, which can initiate transcription. Mg(2+) serves as cofactor. The cofactor is Zn(2+).

The catalysed reaction is RNA(n) + a ribonucleoside 5'-triphosphate = RNA(n+1) + diphosphate. DNA-dependent RNA polymerase catalyzes the transcription of DNA into RNA using the four ribonucleoside triphosphates as substrates. This Rhodopseudomonas palustris (strain TIE-1) protein is DNA-directed RNA polymerase subunit beta'.